We begin with the raw amino-acid sequence, 612 residues long: Kelch-like protein 40a (612 aa).

Residues V34 to E101 enclose the BTB domain. The BACK domain occupies C136–E238. Residues R266 to E275 are compositionally biased toward basic residues. The segment at R266 to G290 is disordered. Positions F281–G290 are enriched in acidic residues. Kelch repeat units follow at residues Q350–N402, S403–G452, L453–N500, I502–G547, and L549–L604.

It belongs to the KLHL40 family. As to quaternary structure, component of the BCR(KLHL40) E3 ubiquitin ligase complex. Expressed in skeletal muscle and heart. Detected, although at much lower levels, in brain, eye and fin.

Its subcellular location is the cytoplasm. It is found in the myofibril. It localises to the sarcomere. The protein localises to the a band. The protein resides in the i band. In terms of biological role, substrate-specific adapter of a BCR (BTB-CUL3-RBX1) E3 ubiquitin ligase complex. Required for skeletal muscle development. This Danio rerio (Zebrafish) protein is Kelch-like protein 40a (klhl40a).